A 352-amino-acid polypeptide reads, in one-letter code: tRNA N6-adenosine threonylcarbamoyltransferase (352 aa).

2 residues coordinate Fe cation: His-117 and His-121. Substrate is bound by residues 140–144 (LVSGG), Asp-173, Gly-186, and Asn-287. Asp-315 lines the Fe cation pocket.

It belongs to the KAE1 / TsaD family. Fe(2+) serves as cofactor.

The protein localises to the cytoplasm. It carries out the reaction L-threonylcarbamoyladenylate + adenosine(37) in tRNA = N(6)-L-threonylcarbamoyladenosine(37) in tRNA + AMP + H(+). Its function is as follows. Required for the formation of a threonylcarbamoyl group on adenosine at position 37 (t(6)A37) in tRNAs that read codons beginning with adenine. Is involved in the transfer of the threonylcarbamoyl moiety of threonylcarbamoyl-AMP (TC-AMP) to the N6 group of A37, together with TsaE and TsaB. TsaD likely plays a direct catalytic role in this reaction. The chain is tRNA N6-adenosine threonylcarbamoyltransferase from Psychrobacter cryohalolentis (strain ATCC BAA-1226 / DSM 17306 / VKM B-2378 / K5).